We begin with the raw amino-acid sequence, 87 residues long: Ragulator complex protein LAMTOR4 homolog (87 aa).

The protein belongs to the LAMTOR4 family. As to quaternary structure, part of the Ragulator complex.

Its subcellular location is the lysosome. In terms of biological role, regulator of the TOR pathway, a signaling cascade that promotes cell growth in response to growth factors, energy levels, and amino acids. As part of the Ragulator complex, may activate the TOR signaling cascade in response to amino acids. The sequence is that of Ragulator complex protein LAMTOR4 homolog from Dictyostelium discoideum (Social amoeba).